A 700-amino-acid polypeptide reads, in one-letter code: Polyribonucleotide nucleotidyltransferase (700 aa).

2 residues coordinate Mg(2+): Asp485 and Asp491. One can recognise a KH domain in the interval 552–611 (PRITTLKINPEKIRDVIGKGGATIRALTEETGTTIELEDDGTVKIASANGDATKEAIRRI). The region spanning 621–689 (GTVYNGKVVR…RQGRVRLSMK (69 aa)) is the S1 motif domain.

It belongs to the polyribonucleotide nucleotidyltransferase family. Component of the RNA degradosome, which is a multiprotein complex involved in RNA processing and mRNA degradation. Mg(2+) is required as a cofactor.

The protein localises to the cytoplasm. It catalyses the reaction RNA(n+1) + phosphate = RNA(n) + a ribonucleoside 5'-diphosphate. Functionally, involved in mRNA degradation. Catalyzes the phosphorolysis of single-stranded polyribonucleotides processively in the 3'- to 5'-direction. This chain is Polyribonucleotide nucleotidyltransferase, found in Shewanella loihica (strain ATCC BAA-1088 / PV-4).